We begin with the raw amino-acid sequence, 299 residues long: Oxygen-dependent coproporphyrinogen-III oxidase (299 aa).

Ser-92 contributes to the substrate binding site. The Mn(2+) site is built by His-96 and His-106. His-106 serves as the catalytic Proton donor. 108 to 110 provides a ligand contact to substrate; that stretch reads NVR. Mn(2+) contacts are provided by His-145 and His-175. Residues 240–275 are important for dimerization; that stretch reads YVEFNLVWDRGTLFGLQTGGRTESILMSMPPLVRWE. A substrate-binding site is contributed by 258-260; that stretch reads GGR.

This sequence belongs to the aerobic coproporphyrinogen-III oxidase family. Homodimer. It depends on Mn(2+) as a cofactor.

The protein resides in the cytoplasm. The enzyme catalyses coproporphyrinogen III + O2 + 2 H(+) = protoporphyrinogen IX + 2 CO2 + 2 H2O. It functions in the pathway porphyrin-containing compound metabolism; protoporphyrin-IX biosynthesis; protoporphyrinogen-IX from coproporphyrinogen-III (O2 route): step 1/1. Involved in the heme biosynthesis. Catalyzes the aerobic oxidative decarboxylation of propionate groups of rings A and B of coproporphyrinogen-III to yield the vinyl groups in protoporphyrinogen-IX. The chain is Oxygen-dependent coproporphyrinogen-III oxidase from Escherichia fergusonii (strain ATCC 35469 / DSM 13698 / CCUG 18766 / IAM 14443 / JCM 21226 / LMG 7866 / NBRC 102419 / NCTC 12128 / CDC 0568-73).